Consider the following 447-residue polypeptide: Tubulin beta-1 chain (447 aa).

A GTP-binding site is contributed by Gln11. Ser40 carries the phosphoserine modification. GTP contacts are provided by Glu69, Ser138, Gly142, Thr143, Gly144, Asn204, and Asn226. Residue Glu69 participates in Mg(2+) binding. Phosphoserine is present on Ser339. The disordered stretch occupies residues 427–447 (EATADEDAEFEEEQEAEVDEN). Residues 429-447 (TADEDAEFEEEQEAEVDEN) are compositionally biased toward acidic residues.

This sequence belongs to the tubulin family. As to quaternary structure, dimer of alpha and beta chains. A typical microtubule is a hollow water-filled tube with an outer diameter of 25 nm and an inner diameter of 15 nM. Alpha-beta heterodimers associate head-to-tail to form protofilaments running lengthwise along the microtubule wall with the beta-tubulin subunit facing the microtubule plus end conferring a structural polarity. Microtubules usually have 13 protofilaments but different protofilament numbers can be found in some organisms and specialized cells. Interacts with mgr and Vhl. Mg(2+) serves as cofactor.

The protein resides in the cytoplasm. It is found in the cytoskeleton. Tubulin is the major constituent of microtubules, a cylinder consisting of laterally associated linear protofilaments composed of alpha- and beta-tubulin heterodimers. Microtubules grow by the addition of GTP-tubulin dimers to the microtubule end, where a stabilizing cap forms. Below the cap, tubulin dimers are in GDP-bound state, owing to GTPase activity of alpha-tubulin. In Drosophila melanogaster (Fruit fly), this protein is Tubulin beta-1 chain (betaTub56D).